Reading from the N-terminus, the 167-residue chain is Small ribosomal subunit protein uS5 (167 aa).

In terms of domain architecture, S5 DRBM spans 12-75 (LQEKLVAVNR…EKARRNIVSV (64 aa)).

Belongs to the universal ribosomal protein uS5 family. In terms of assembly, part of the 30S ribosomal subunit. Contacts proteins S4 and S8.

Functionally, with S4 and S12 plays an important role in translational accuracy. Its function is as follows. Located at the back of the 30S subunit body where it stabilizes the conformation of the head with respect to the body. The polypeptide is Small ribosomal subunit protein uS5 (Shewanella loihica (strain ATCC BAA-1088 / PV-4)).